The sequence spans 239 residues: Geranylgeranylglyceryl phosphate synthase (239 aa).

Mg(2+) is bound by residues D18 and S45. Sn-glycerol 1-phosphate is bound by residues Y166 to G172, G197 to G198, and G219 to T220.

Belongs to the GGGP/HepGP synthase family. Group II subfamily. The cofactor is Mg(2+).

It localises to the cytoplasm. The enzyme catalyses sn-glycerol 1-phosphate + (2E,6E,10E)-geranylgeranyl diphosphate = sn-3-O-(geranylgeranyl)glycerol 1-phosphate + diphosphate. Its pathway is membrane lipid metabolism; glycerophospholipid metabolism. Prenyltransferase that catalyzes the transfer of the geranylgeranyl moiety of geranylgeranyl diphosphate (GGPP) to the C3 hydroxyl of sn-glycerol-1-phosphate (G1P). This reaction is the first ether-bond-formation step in the biosynthesis of archaeal membrane lipids. The protein is Geranylgeranylglyceryl phosphate synthase of Pyrobaculum islandicum (strain DSM 4184 / JCM 9189 / GEO3).